Reading from the N-terminus, the 265-residue chain is Protein ENDO16 (265 aa).

The Cell attachment site signature appears at 25–27 (RGD). Residues 71–265 (SPNAPSSQME…KEEEEEERSG (195 aa)) are disordered. Over residues 73–92 (NAPSSQMESEGSANPSTIGS) the composition is skewed to polar residues. A run of 4 repeats spans residues 75–94 (PSSQMESEGSANPSTIGSVS), 105–124 (ESERSESEGSEGEDSEETEG), 128–147 (PHEQMESEGGDQEESEGAEQ), and 148–167 (PQEQMESEGQEPESEEDVDS). Residues 75–257 (PSSQMESEGS…QSESEDPEKE (183 aa)) are 6 X approximate repeats. 6 stretches are compositionally biased toward acidic residues: residues 112-125 (EGSEGEDSEETEGA), 133-144 (ESEGGDQEESEG), 152-169 (MESEGQEPESEEDVDSGE), 194-212 (EVDEQTSDGEEPEEPEEPG), 222-243 (ESEGEGNESEEEEVEEPQEVIE), and 250-265 (ESEDPEKEEEEEERSG). Repeat copies occupy residues 217-236 (PHEQMESEGEGNESEEEEVE) and 238-257 (PQEVIESEGQQSESEDPEKE). N228 is a glycosylation site (N-linked (GlcNAc...) asparagine).

First expressed in the vegetal plate and progressively the expression becomes restricted to a subset of endodermal cells as development proceeds.

Its function is as follows. May be an adhesion molecule involved in gastrulation of the sea urchin embryo. This Strongylocentrotus purpuratus (Purple sea urchin) protein is Protein ENDO16 (ENDO16).